Here is a 90-residue protein sequence, read N- to C-terminus: MFIALGIQLFVAVTYAAGKDDEHFSVDYCGMNCTQQEDGSWTACSGRNEECRCYHESGKKNGLCLSTTYIDFSQYGNPSDSDIAAASPRP.

The signal sequence occupies residues 1–18 (MFIALGIQLFVAVTYAAG). 3 cysteine pairs are disulfide-bonded: Cys29/Cys51, Cys33/Cys53, and Cys44/Cys64. N-linked (GlcNAc...) asparagine glycosylation is present at Asn32.

It localises to the secreted. Functionally, salivary chemokine-binding protein which binds to host chemokines CXCL1, CXCL2, CXCL3, CXCL5 and CXCL8. The chain is Evasin P1128 from Ixodes ricinus (Common tick).